A 352-amino-acid chain; its full sequence is Decapping nuclease din1 (352 aa).

Substrate contacts are provided by residues Arg-33 and 93 to 95 (WRG). An a divalent metal cation-binding site is contributed by Glu-150. Substrate-binding residues include Cys-182 and Glu-199. Residue Asp-201 participates in a divalent metal cation binding. Position 218 is a phosphoserine (Ser-218). Residues Glu-239 and Leu-240 each coordinate a divalent metal cation. Residues Lys-241 and Gln-263 each coordinate substrate.

Belongs to the DXO/Dom3Z family. As to quaternary structure, interacts with dhp1/Rat1; the interaction is direct, stabilizes dhp1 protein structure and stimulates its exoribonuclease activity. The interaction also stimulates din1 pyrophosphohydrolase activity, probably by recruiting it to mRNA substrates. Requires a divalent metal cation as cofactor.

It localises to the nucleus. It catalyses the reaction a 5'-end NAD(+)-phospho-ribonucleoside in mRNA + H2O = a 5'-end phospho-ribonucleoside in mRNA + NAD(+) + H(+). The enzyme catalyses a 5'-end (N(7)-methyl 5'-triphosphoguanosine)-ribonucleoside-ribonucleotide in mRNA + H2O = a (N(7)-methyl 5'-triphosphoguanosine)-nucleoside + a 5'-end phospho-ribonucleoside in mRNA + H(+). The catalysed reaction is a 5'-end triphospho-ribonucleoside in mRNA + H2O = a 5'-end phospho-ribonucleoside in mRNA + diphosphate + H(+). Decapping enzyme for NAD-capped RNAs: specifically hydrolyzes the nicotinamide adenine dinucleotide (NAD) cap from a subset of RNAs by removing the entire NAD moiety from the 5'-end of an NAD-capped RNA. The NAD-cap is present at the 5'-end of some RNAs and snoRNAs. In contrast to the canonical 5'-end N7 methylguanosine (m7G) cap, the NAD cap promotes mRNA decay. Also acts as a non-canonical decapping enzyme that removes the entire cap structure of m7G capped or incompletely capped RNAs and mediates their subsequent degradation. Specifically degrades pre-mRNAs with a defective m7G cap and is part of a pre-mRNA capping quality control. Has decapping activity toward incomplete 5'-end m7G cap mRNAs such as unmethylated 5'-end-capped RNA (cap0), while it has no activity toward 2'-O-ribose methylated m7G cap (cap1). Also possesses RNA 5'-pyrophosphohydrolase activity by hydrolyzing the 5'-end triphosphate to release pyrophosphates. Stimulates exoribonuclease activity of dhp1, allowing it to degrade RNAs with stable secondary structure more effectively. In Schizosaccharomyces pombe (strain 972 / ATCC 24843) (Fission yeast), this protein is Decapping nuclease din1.